A 687-amino-acid polypeptide reads, in one-letter code: Fimbrin-5 (687 aa).

The EF-hand domain occupies 7–74 (VLVSDPWLQS…KSVLDKSYPN (68 aa)). 4 Calponin-homology (CH) domains span residues 122-239 (ESEK…KIQM), 267-370 (LAPE…QHRN), 392-498 (SREE…RYTM), and 513-621 (EITD…YWSL). Actin-binding regions lie at residues 122–370 (ESEK…QHRN) and 392–621 (SREE…YWSL). A disordered region spans residues 628–687 (ESTVSEDATDDGDANSVAGEISNLSIDGASESSPTVQDQELLTKADNDEDEVDGENNKDA). Positions 649–667 (SNLSIDGASESSPTVQDQE) are enriched in polar residues.

As to quaternary structure, interacts with F-actin. As to expression, expressed in mature pollen.

Its subcellular location is the cytoplasm. It is found in the cytoskeleton. In terms of biological role, cross-links actin filaments (F-actin) in a calcium independent manner. Induces the formation of actin bundles. Stabilizes and prevents F-actin depolymerization mediated by latrunculin B (LatB). The chain is Fimbrin-5 from Arabidopsis thaliana (Mouse-ear cress).